Reading from the N-terminus, the 1386-residue chain is DNA-directed RNA polymerase subunit beta' (1386 aa).

The Zn(2+) site is built by Cys-75, Cys-77, Cys-90, and Cys-93. 3 residues coordinate Mg(2+): Asp-466, Asp-468, and Asp-470. Residues Cys-809, Cys-883, Cys-890, and Cys-893 each coordinate Zn(2+).

This sequence belongs to the RNA polymerase beta' chain family. In terms of assembly, the RNAP catalytic core consists of 2 alpha, 1 beta, 1 beta' and 1 omega subunit. When a sigma factor is associated with the core the holoenzyme is formed, which can initiate transcription. Mg(2+) serves as cofactor. It depends on Zn(2+) as a cofactor.

The enzyme catalyses RNA(n) + a ribonucleoside 5'-triphosphate = RNA(n+1) + diphosphate. Its function is as follows. DNA-dependent RNA polymerase catalyzes the transcription of DNA into RNA using the four ribonucleoside triphosphates as substrates. This chain is DNA-directed RNA polymerase subunit beta', found in Oleidesulfovibrio alaskensis (strain ATCC BAA-1058 / DSM 17464 / G20) (Desulfovibrio alaskensis).